The primary structure comprises 541 residues: Chaperonin GroEL (541 aa).

ATP is bound by residues 29 to 32 (TLGP), 86 to 90 (DGTTT), Gly-413, 476 to 478 (NAA), and Asp-492. The segment at 521 to 541 (KPEDNPAPAAPAANPGMGGMM) is disordered. Residues 526–535 (PAPAAPAANP) are compositionally biased toward low complexity.

This sequence belongs to the chaperonin (HSP60) family. As to quaternary structure, forms a cylinder of 14 subunits composed of two heptameric rings stacked back-to-back. Interacts with the co-chaperonin GroES.

Its subcellular location is the cytoplasm. It catalyses the reaction ATP + H2O + a folded polypeptide = ADP + phosphate + an unfolded polypeptide.. Together with its co-chaperonin GroES, plays an essential role in assisting protein folding. The GroEL-GroES system forms a nano-cage that allows encapsulation of the non-native substrate proteins and provides a physical environment optimized to promote and accelerate protein folding. This chain is Chaperonin GroEL, found in Levilactobacillus brevis (strain ATCC 367 / BCRC 12310 / CIP 105137 / JCM 1170 / LMG 11437 / NCIMB 947 / NCTC 947) (Lactobacillus brevis).